Reading from the N-terminus, the 345-residue chain is tRNA pseudouridine synthase B (345 aa).

Residue Asp-39 is the Nucleophile of the active site.

This sequence belongs to the pseudouridine synthase TruB family. Type 1 subfamily.

The catalysed reaction is uridine(55) in tRNA = pseudouridine(55) in tRNA. In terms of biological role, responsible for synthesis of pseudouridine from uracil-55 in the psi GC loop of transfer RNAs. This chain is tRNA pseudouridine synthase B, found in Rickettsia africae (strain ESF-5).